Reading from the N-terminus, the 622-residue chain is Low affinity potassium transport system protein Kup (622 aa).

Helical transmembrane passes span 9-29 (LSAV…TSPL), 46-66 (PDVV…VVSV), 101-121 (ILVV…VITP), 137-157 (PALD…LFVI), 165-185 (VGKL…LLGL), 213-233 (VSFF…ALYA), 247-267 (WFTV…ALLL), 276-296 (PFFL…ATLA), 337-357 (IYIP…IIGF), 363-383 (LAAA…ILFC), 395-415 (FLVA…FSAN), and 416-436 (VLKL…MFII).

This sequence belongs to the HAK/KUP transporter (TC 2.A.72) family.

The protein resides in the cell inner membrane. It catalyses the reaction K(+)(in) + H(+)(in) = K(+)(out) + H(+)(out). Its function is as follows. Responsible for the low-affinity transport of potassium into the cell. Likely operates as a K(+):H(+) symporter. The chain is Low affinity potassium transport system protein Kup from Yersinia pseudotuberculosis serotype O:1b (strain IP 31758).